Here is a 411-residue protein sequence, read N- to C-terminus: 2,3-bisphosphoglycerate-independent phosphoglycerate mutase (411 aa).

Belongs to the BPG-independent phosphoglycerate mutase family. A-PGAM subfamily.

The enzyme catalyses (2R)-2-phosphoglycerate = (2R)-3-phosphoglycerate. Its pathway is carbohydrate degradation; glycolysis; pyruvate from D-glyceraldehyde 3-phosphate: step 3/5. Catalyzes the interconversion of 2-phosphoglycerate and 3-phosphoglycerate. The polypeptide is 2,3-bisphosphoglycerate-independent phosphoglycerate mutase (Pyrobaculum neutrophilum (strain DSM 2338 / JCM 9278 / NBRC 100436 / V24Sta) (Thermoproteus neutrophilus)).